Reading from the N-terminus, the 150-residue chain is SsrA-binding protein (150 aa).

Belongs to the SmpB family.

It is found in the cytoplasm. Required for rescue of stalled ribosomes mediated by trans-translation. Binds to transfer-messenger RNA (tmRNA), required for stable association of tmRNA with ribosomes. tmRNA and SmpB together mimic tRNA shape, replacing the anticodon stem-loop with SmpB. tmRNA is encoded by the ssrA gene; the 2 termini fold to resemble tRNA(Ala) and it encodes a 'tag peptide', a short internal open reading frame. During trans-translation Ala-aminoacylated tmRNA acts like a tRNA, entering the A-site of stalled ribosomes, displacing the stalled mRNA. The ribosome then switches to translate the ORF on the tmRNA; the nascent peptide is terminated with the 'tag peptide' encoded by the tmRNA and targeted for degradation. The ribosome is freed to recommence translation, which seems to be the essential function of trans-translation. The chain is SsrA-binding protein from Coprothermobacter proteolyticus (strain ATCC 35245 / DSM 5265 / OCM 4 / BT).